The chain runs to 201 residues: UPF0637 protein LCA_0842 (201 aa).

Belongs to the UPF0637 family.

This is UPF0637 protein LCA_0842 from Latilactobacillus sakei subsp. sakei (strain 23K) (Lactobacillus sakei subsp. sakei).